A 466-amino-acid chain; its full sequence is Asparagine--tRNA ligase (466 aa).

The protein belongs to the class-II aminoacyl-tRNA synthetase family. In terms of assembly, homodimer.

It is found in the cytoplasm. The enzyme catalyses tRNA(Asn) + L-asparagine + ATP = L-asparaginyl-tRNA(Asn) + AMP + diphosphate + H(+). The chain is Asparagine--tRNA ligase from Shewanella loihica (strain ATCC BAA-1088 / PV-4).